The following is a 234-amino-acid chain: Thymidine kinase, cytosolic (234 aa).

Position 2 is an N-acetylserine (serine 2). Serine 2 and serine 13 each carry phosphoserine. ATP contacts are provided by residues 26 to 33 (GPMFSGKS), 58 to 60 (DTR), and 97 to 100 (DEGQ). Residue glutamate 98 is the Proton acceptor of the active site. Phenylalanine 128 contacts substrate. Zn(2+)-binding residues include cysteine 153 and cysteine 156. Residues 172–176 (VEVIG) and tyrosine 181 each bind substrate. Zn(2+) is bound by residues cysteine 185 and cysteine 188. The short motif at 203–205 (KEN) is the KEN box element. Serine 231 is subject to Phosphoserine.

The protein belongs to the thymidine kinase family. In terms of assembly, homotetramer. Tetramerization from dimerization is induced by ATP and increases catalytic efficiency due to a high affinity for thymidine. Tetramerization is inhibited by phosphorylation at Ser-13. Interacts (via the KEN box) with FZR1. In terms of processing, phosphorylated on Ser-13 in mitosis. Phosphorylation of Ser-13 by CDK1 during mitosis reduces homotetramerization and catalytic efficiency when DNA replication is complete and intracellular TK1 is still present at a high level. Polyubiquitinated. Postmitosis, ubiquitination leads to proteasomal degradation. The KEN box sequence located at the C-terminal region targets for degradation by the anaphase promoting complex (APC/C) activated and rate-limited by FZR1.

It is found in the cytoplasm. It catalyses the reaction thymidine + ATP = dTMP + ADP + H(+). In terms of biological role, cell-cycle-regulated enzyme of importance in nucleotide metabolism. Catalyzes the first enzymatic step in the salvage pathway converting thymidine into thymidine monophosphate. Transcriptional regulation limits expression to the S phase of the cell cycle and transient expression coincides with the oscillation in the intracellular dTTP concentration. Also important for the activation of anticancer and antiviral nucleoside analog prodrugs such as 1-b-d-arabinofuranosylcytosine (AraC) and 3c-azido-3c-deoxythymidine (AZT). This Homo sapiens (Human) protein is Thymidine kinase, cytosolic.